The primary structure comprises 322 residues: Lipoyl synthase (322 aa).

[4Fe-4S] cluster-binding residues include cysteine 69, cysteine 74, cysteine 80, cysteine 95, cysteine 99, cysteine 102, and serine 309. The Radical SAM core domain maps to 81 to 298 (FNHGTATFMI…KEIALELGFT (218 aa)).

This sequence belongs to the radical SAM superfamily. Lipoyl synthase family. It depends on [4Fe-4S] cluster as a cofactor.

It is found in the cytoplasm. It carries out the reaction [[Fe-S] cluster scaffold protein carrying a second [4Fe-4S](2+) cluster] + N(6)-octanoyl-L-lysyl-[protein] + 2 oxidized [2Fe-2S]-[ferredoxin] + 2 S-adenosyl-L-methionine + 4 H(+) = [[Fe-S] cluster scaffold protein] + N(6)-[(R)-dihydrolipoyl]-L-lysyl-[protein] + 4 Fe(3+) + 2 hydrogen sulfide + 2 5'-deoxyadenosine + 2 L-methionine + 2 reduced [2Fe-2S]-[ferredoxin]. The protein operates within protein modification; protein lipoylation via endogenous pathway; protein N(6)-(lipoyl)lysine from octanoyl-[acyl-carrier-protein]: step 2/2. In terms of biological role, catalyzes the radical-mediated insertion of two sulfur atoms into the C-6 and C-8 positions of the octanoyl moiety bound to the lipoyl domains of lipoate-dependent enzymes, thereby converting the octanoylated domains into lipoylated derivatives. The protein is Lipoyl synthase of Photobacterium profundum (strain SS9).